We begin with the raw amino-acid sequence, 251 residues long: uncharacterized protein (251 aa).

It to M.jannaschii MJ1311.

This is an uncharacterized protein from Methanocaldococcus jannaschii (strain ATCC 43067 / DSM 2661 / JAL-1 / JCM 10045 / NBRC 100440) (Methanococcus jannaschii).